A 441-amino-acid chain; its full sequence is uncharacterized protein (441 aa).

Gly-57–Thr-64 is a binding site for ATP.

This is an uncharacterized protein from Methanocaldococcus jannaschii (strain ATCC 43067 / DSM 2661 / JAL-1 / JCM 10045 / NBRC 100440) (Methanococcus jannaschii).